The primary structure comprises 188 residues: Accessory gene regulator protein B (188 aa).

4 helical membrane passes run 49 to 69 (VALL…YFFV), 82 to 102 (LLCH…IVHF), 104 to 124 (VSWT…ICYA), and 163 to 183 (YMQL…PIFF).

It belongs to the AgrB family.

Its subcellular location is the cell membrane. Essential for the production of a quorum sensing system signal molecule, the autoinducing peptide (AIP). This quorum sensing system is responsible for the regulation of the expression of virulence factor genes. Involved in the proteolytic processing of AgrD, the precursor of AIP. The chain is Accessory gene regulator protein B from Staphylococcus lugdunensis.